Consider the following 317-residue polypeptide: Peroxidase 64 (317 aa).

Residues 1–22 (MNAHMLNLLVIVIFVVSFDVQA) form the signal peptide. Disulfide bonds link cysteine 32-cysteine 111, cysteine 65-cysteine 70, cysteine 117-cysteine 313, and cysteine 195-cysteine 227. The Proton acceptor role is filled by histidine 63. Aspartate 64, valine 67, glycine 69, aspartate 71, and serine 73 together coordinate Ca(2+). Residue proline 158 coordinates substrate. Asparagine 163 carries N-linked (GlcNAc...) asparagine glycosylation. Histidine 188 is a binding site for heme b. Position 189 (threonine 189) interacts with Ca(2+). Ca(2+)-binding residues include aspartate 241, threonine 243, and aspartate 248.

The protein belongs to the peroxidase family. Classical plant (class III) peroxidase subfamily. Heme b serves as cofactor. The cofactor is Ca(2+). Expressed in the whole plant, but preferentially in roots.

It localises to the secreted. The enzyme catalyses 2 a phenolic donor + H2O2 = 2 a phenolic radical donor + 2 H2O. Its function is as follows. Removal of H(2)O(2), oxidation of toxic reductants, biosynthesis and degradation of lignin, suberization, auxin catabolism, response to environmental stresses such as wounding, pathogen attack and oxidative stress. These functions might be dependent on each isozyme/isoform in each plant tissue. The protein is Peroxidase 64 (PER64) of Arabidopsis thaliana (Mouse-ear cress).